Here is a 515-residue protein sequence, read N- to C-terminus: UDP-glucosyltransferase 2 (515 aa).

Residues 1–20 (MEFRLLILALFSVLMSTSNG) form the signal peptide. Over 21–471 (AEILALFPIH…TAGAFLHWYQ (451 aa)) the chain is Lumenal. Asn51, Asn236, and Asn303 each carry an N-linked (GlcNAc...) asparagine glycan. A helical transmembrane segment spans residues 472-492 (YLLLDVITFLLVTFCAFCFIV). Residues 493 to 515 (KYICKALIHHYWSSSKSEKLKKN) lie on the Cytoplasmic side of the membrane.

It belongs to the UDP-glycosyltransferase family. Post-translationally, glycosylated.

The protein resides in the endoplasmic reticulum membrane. The catalysed reaction is kermesate + UDP-alpha-D-glucose = carminate + UDP + 2 H(+). The enzyme catalyses flavokermesate + UDP-alpha-D-glucose = flavokermesate 7-C-beta-D-glucoside + UDP + 2 H(+). Its function is as follows. Membrane-bound UDP-glucosyltransferase (UGT) which catalyzes the C-glucosylation of kermesate and flavokermesate to produce carminate and flavokermesate 7-C-beta-D-glucoside (dcll) respectively. Carminate is used as a deterrent against insect predators. This Dactylopius coccus (Cochineal) protein is UDP-glucosyltransferase 2.